Consider the following 370-residue polypeptide: Phosphate acyltransferase (370 aa).

A disordered region spans residues 349-370 (SAGRAGQDAPDEMAAPGRSEKR).

The protein belongs to the PlsX family. In terms of assembly, homodimer. Probably interacts with PlsY.

The protein resides in the cytoplasm. The catalysed reaction is a fatty acyl-[ACP] + phosphate = an acyl phosphate + holo-[ACP]. The protein operates within lipid metabolism; phospholipid metabolism. Its function is as follows. Catalyzes the reversible formation of acyl-phosphate (acyl-PO(4)) from acyl-[acyl-carrier-protein] (acyl-ACP). This enzyme utilizes acyl-ACP as fatty acyl donor, but not acyl-CoA. This Cereibacter sphaeroides (strain ATCC 17023 / DSM 158 / JCM 6121 / CCUG 31486 / LMG 2827 / NBRC 12203 / NCIMB 8253 / ATH 2.4.1.) (Rhodobacter sphaeroides) protein is Phosphate acyltransferase.